Here is a 128-residue protein sequence, read N- to C-terminus: MARKKNTKRKVKKNVPLGIAHIHTTFNNTIVTITDLNGNAVTWSSAGALGFKGSRKSTPFAAQLAAEAVAKAAMEHGMVKVETFITGPGPGREAAIRSLQAAGLEITAIKDVTAVPHNGCRPPKPPRG.

The protein belongs to the universal ribosomal protein uS11 family. Part of the 30S ribosomal subunit. Interacts with proteins S7 and S18. Binds to IF-3.

Its function is as follows. Located on the platform of the 30S subunit, it bridges several disparate RNA helices of the 16S rRNA. Forms part of the Shine-Dalgarno cleft in the 70S ribosome. In Aster yellows witches'-broom phytoplasma (strain AYWB), this protein is Small ribosomal subunit protein uS11.